The chain runs to 250 residues: Neurotrophic factor BDNF precursor form (250 aa).

A signal peptide spans 1–18; it reads MTILFLTMVISYFGCMKA. The propeptide occupies 19–131; sequence APMKEANLRA…AANMSMRVRR (113 aa). Cystine bridges form between C144–C211, C189–C240, and C199–C242.

It belongs to the NGF-beta family. In terms of assembly, monomers and homodimers. Binds to NTRK2/TRKB. Can form heterodimers with other neurotrophin family members, such as NTF3 and NTF4 (in vitro), but the physiological relevance of this is not clear. BDNF precursor form: interacts with the heterodimer formed by NGFR and SORCS2. Mature BDNF has much lower affinity for the heterodimer formed by NGFR and SORCS2. Post-translationally, N-glycosylated and glycosulfated, contrary to mature BDNF. In terms of processing, mature BDNF is produced by proteolytic removal of the propeptide, catalyzed by a FURIN family member. In addition, the precursor form is proteolytically cleaved within the propeptide, but this is not an obligatory intermediate for the production of mature BDNF. Can be converted into mature BDNF by plasmin (PLG).

It is found in the secreted. Its function is as follows. Important signaling molecule that activates signaling cascades downstream of NTRK2. During development, promotes the survival and differentiation of selected neuronal populations of the peripheral and central nervous systems. Participates in axonal growth, pathfinding and in the modulation of dendritic growth and morphology. Major regulator of synaptic transmission and plasticity at adult synapses in many regions of the CNS. The versatility of BDNF is emphasized by its contribution to a range of adaptive neuronal responses including long-term potentiation (LTP), long-term depression (LTD), certain forms of short-term synaptic plasticity, as well as homeostatic regulation of intrinsic neuronal excitability. Important signaling molecule that activates signaling cascades downstream of NTRK2. Activates signaling cascades via the heterodimeric receptor formed by NGFR and SORCS2. Signaling via NGFR and SORCS2 plays a role in synaptic plasticity and long-term depression (LTD). Binding to NGFR and SORCS2 promotes neuronal apoptosis. Promotes neuronal growth cone collapse. The protein is Neurotrophic factor BDNF precursor form (BDNF) of Bos taurus (Bovine).